We begin with the raw amino-acid sequence, 522 residues long: Nitrogen fixation protein VnfA (522 aa).

Positions 22–183 are a domain; that stretch reads LLYEMSQIAT…AQAVELYLVE (162 aa). Residues 35–177 form the GAF domain; it reads DLSSIISILL…ILATTTAQAV (143 aa). The Sigma-54 factor interaction domain maps to 210–439; the sequence is IIGNSKPMLE…LENVIERAML (230 aa). Residues 238–245 and 301–310 contribute to the ATP site; these read GESGVGKE and AAGGTIFLDE. Residues 493-512 constitute a DNA-binding region (H-T-H motif); the sequence is MTEAATHLGLTARVLGLRMG.

In terms of biological role, required for the expression of the V-dependent nitrogen fixation system in Azotobacter vinelandii. It is required for the regulation of nitrogenase 2 transcription. Interacts with sigma-54. The chain is Nitrogen fixation protein VnfA (vnfA) from Azotobacter vinelandii.